A 248-amino-acid polypeptide reads, in one-letter code: Deoxyribose-phosphate aldolase (248 aa).

The active-site Proton donor/acceptor is aspartate 117. Residue lysine 179 is the Schiff-base intermediate with acetaldehyde of the active site. Lysine 208 serves as the catalytic Proton donor/acceptor.

The protein belongs to the DeoC/FbaB aldolase family. DeoC type 1 subfamily.

It localises to the cytoplasm. It catalyses the reaction 2-deoxy-D-ribose 5-phosphate = D-glyceraldehyde 3-phosphate + acetaldehyde. Its pathway is carbohydrate degradation; 2-deoxy-D-ribose 1-phosphate degradation; D-glyceraldehyde 3-phosphate and acetaldehyde from 2-deoxy-alpha-D-ribose 1-phosphate: step 2/2. In terms of biological role, catalyzes a reversible aldol reaction between acetaldehyde and D-glyceraldehyde 3-phosphate to generate 2-deoxy-D-ribose 5-phosphate. This is Deoxyribose-phosphate aldolase from Thermotoga sp. (strain RQ2).